The primary structure comprises 336 residues: Anthranilate phosphoribosyltransferase (336 aa).

5-phospho-alpha-D-ribose 1-diphosphate-binding positions include G79, 82–83, T87, 89–92, 107–115, and S119; these read GD, NIST, and KHGNRSVSS. Anthranilate is bound at residue G79. Residue S91 participates in Mg(2+) binding. N110 contacts anthranilate. R165 is an anthranilate binding site. D224 and E225 together coordinate Mg(2+).

Belongs to the anthranilate phosphoribosyltransferase family. As to quaternary structure, homodimer. Mg(2+) is required as a cofactor.

It catalyses the reaction N-(5-phospho-beta-D-ribosyl)anthranilate + diphosphate = 5-phospho-alpha-D-ribose 1-diphosphate + anthranilate. It functions in the pathway amino-acid biosynthesis; L-tryptophan biosynthesis; L-tryptophan from chorismate: step 2/5. Catalyzes the transfer of the phosphoribosyl group of 5-phosphorylribose-1-pyrophosphate (PRPP) to anthranilate to yield N-(5'-phosphoribosyl)-anthranilate (PRA). In Endomicrobium trichonymphae, this protein is Anthranilate phosphoribosyltransferase.